Reading from the N-terminus, the 449-residue chain is Phosphoglucosamine mutase (449 aa).

The Phosphoserine intermediate role is filled by Ser-104. Residues Ser-104, Asp-243, Asp-245, and Asp-247 each coordinate Mg(2+). Ser-104 bears the Phosphoserine mark.

Belongs to the phosphohexose mutase family. Requires Mg(2+) as cofactor. Activated by phosphorylation.

The catalysed reaction is alpha-D-glucosamine 1-phosphate = D-glucosamine 6-phosphate. Functionally, catalyzes the conversion of glucosamine-6-phosphate to glucosamine-1-phosphate. The protein is Phosphoglucosamine mutase of Xanthomonas campestris pv. campestris (strain 8004).